The primary structure comprises 287 residues: tRNA (guanine(9)-N1)-methyltransferase (287 aa).

The tract at residues 1-27 is disordered; the sequence is MSDTSDLVDGKWQRLPPVPEGMSKSQW. The 194-residue stretch at 79 to 272 folds into the SAM-dependent MTase TRM10-type domain; the sequence is EPRVNRDQVA…SVIPSRKLDP (194 aa). Residues 179 to 180, glycine 199, 203 to 207, cysteine 211, leucine 225, and 237 to 239 each bind S-adenosyl-L-methionine; these read LT, DKNRH, and KVL. The active-site Proton acceptor is aspartate 203. Residues 268–278 are compositionally biased toward basic and acidic residues; it reads RKLDPVKEKEQ. A disordered region spans residues 268 to 287; that stretch reads RKLDPVKEKEQQQQQQQQQQ.

The protein belongs to the class IV-like SAM-binding methyltransferase superfamily. TRM10 family. In terms of assembly, monomer.

The protein localises to the cytoplasm. The protein resides in the nucleus. The catalysed reaction is guanosine(9) in tRNA + S-adenosyl-L-methionine = N(1)-methylguanosine(9) in tRNA + S-adenosyl-L-homocysteine + H(+). S-adenosyl-L-methionine-dependent guanine N(1)-methyltransferase that catalyzes the formation of N(1)-methylguanine at position 9 (m1G9) in cytoplasmic tRNA. The sequence is that of tRNA (guanine(9)-N1)-methyltransferase from Candida glabrata (strain ATCC 2001 / BCRC 20586 / JCM 3761 / NBRC 0622 / NRRL Y-65 / CBS 138) (Yeast).